The following is a 1588-amino-acid chain: Paternally-expressed gene 3 protein (1588 aa).

The region spanning 46 to 128 (HQRFRNLIYV…TLLENYKEMY (83 aa)) is the SCAN box domain. Disordered stretches follow at residues 128 to 230 (YQPE…ESYQ), 266 to 306 (DGHS…RRGI), and 319 to 349 (KFIKDVSRSSKSGRARESSDRSQRFPRMSDD). Residues 129 to 142 (QPEDDNNSDVTSDD) are compositionally biased toward acidic residues. Composition is skewed to basic and acidic residues over residues 143-152 (DMTRNRRESS), 161-182 (SGDRDWDRRGRSRDMEPRDRWS), 206-225 (FEMDRDDDRDSRAYESRSQD), and 295-306 (PEAKKSTHRRGI). 3 consecutive C2H2-type zinc fingers follow at residues 454–476 (YVCDECGRSFSVISEFVEHQIMH), 507–529 (FECKDCGETFNKSAALAEHRKIH), and 565–587 (YECRVCKETFLHSSALIEHQKIH). Residues 588–607 (FGDDKDNEREHERERERGET) show a composition bias toward basic and acidic residues. Residues 588–610 (FGDDKDNEREHERERERGETFRP) are disordered. The C2H2-type 4 zinc-finger motif lies at 627 to 649 (YECKVCGETFLHSSSLKEHQKIH). Residues 838–930 (LVASKPPRSH…EFSVPSSNVR (93 aa)) form a disordered region. The span at 868–881 (LNDKRQKIPARENP) shows a compositional bias: basic and acidic residues. The segment at 969 to 991 (YECQECGECFAHSSDLTEHQKIH) adopts a C2H2-type 5 zinc-finger fold. Residues 1056–1104 (EKSHGEESQGENTDGEETHSEETHGQETIEDPVIQGSDMEDPQKDDPDD) are disordered. Residues 1071 to 1082 (EETHSEETHGQE) are compositionally biased toward basic and acidic residues. C2H2-type zinc fingers lie at residues 1107–1129 (YECEDCGLGFVDLTDLTDHQKVH), 1163–1185 (YECPKCGESFIHSSFLFEHQRIH), 1225–1247 (IRCLLCGQGFIHSSALNEHMRLH), 1282–1304 (FECAVCGESFINPAELADHVTVH), and 1332–1354 (YECKDCGKSFIHSTVLTKHKELH). Positions 1395–1415 (AEPEVEAAEPEVEAAEPEVEA) are enriched in acidic residues. The disordered stretch occupies residues 1395-1495 (AEPEVEAAEP…GIEDPEEGED (101 aa)). Tandem repeats lie at residues 1397–1403 (PEVEAAE), 1404–1410 (PEVEAAE), 1411–1417 (PEVEAAE), 1418–1422 (PNGEA), 1425–1429 (PDGEA), 1432–1436 (PIGEA), and 1439–1443 (PNGEA). The tract at residues 1397 to 1417 (PEVEAAEPEVEAAEPEVEAAE) is 3 X 7 AA repeat of P-E-V-E-A-A-E. The segment at 1418-1443 (PNGEAEGPDGEAAEPIGEAGQPNGEA) is 4 X 5 AA repeat of P-X-G-E-A. Composition is skewed to acidic residues over residues 1449 to 1466 (DADEPDGAGIEDPEERAE) and 1475 to 1495 (PEGDADEPDGVGIEDPEEGED). 2 C2H2-type zinc fingers span residues 1505–1527 (YDCHECTETFTSSTAFGEHLKTH) and 1564–1586 (FKCDVCGQLFNDRLSLARHQNTH).

It belongs to the krueppel C2H2-type zinc-finger protein family. Homodimer. Interacts with SIAH1A and SIAH2. Interacts with TRAF2.

It is found in the nucleus. The protein resides in the cytoplasm. Induces apoptosis in cooperation with SIAH1A. Acts as a mediator between p53/TP53 and BAX in a neuronal death pathway that is activated by DNA damage. Acts synergistically with TRAF2 and inhibits TNF induced apoptosis through activation of NF-kappa-B. The protein is Paternally-expressed gene 3 protein (PEG3) of Pan troglodytes (Chimpanzee).